Here is a 567-residue protein sequence, read N- to C-terminus: Organic cation transporter-like protein (567 aa).

Residues 1-21 lie on the Cytoplasmic side of the membrane; the sequence is MGYDEAIIHLGDFGRYQKIIY. The helical transmembrane segment at 22–42 threads the bilayer; it reads FLICLTSIPVAFHKLAGVFLL. At 43 to 127 the chain is on the extracellular side; the sequence is AKPDFRCALP…TEWNLVCGRD (85 aa). Asn-55, Asn-67, Asn-89, and Asn-97 each carry an N-linked (GlcNAc...) asparagine glycan. Residues 128-148 traverse the membrane as a helical segment; the sequence is FMAATSDSLFMLGVLLGSIVF. The Cytoplasmic segment spans residues 149–158; it reads GQLSDKYGRK. A helical transmembrane segment spans residues 159-179; the sequence is PILFASLVIQVLFGVLAGVAP. Residues 180–189 lie on the Extracellular side of the membrane; that stretch reads EYFTYTFARL. Residues 190–210 form a helical membrane-spanning segment; the sequence is MVGATTSGVFLVAYVVAMEMV. Topologically, residues 211 to 219 are cytoplasmic; it reads GPDKRLYAG. A helical membrane pass occupies residues 220–240; it reads IFVMMFFSVGFMLTAVFAYFV. Residues 241 to 244 are Extracellular-facing; that stretch reads HDWR. The helical transmembrane segment at 245-265 threads the bilayer; the sequence is WLQIALTLPGLIFMFYYWIIP. The Cytoplasmic segment spans residues 266-343; it reads ESARWLLLKG…LFCYPNLRRK (78 aa). A disordered region spans residues 304 to 326; the sequence is LDEGENSEEKAKQKLEDQELDEG. Positions 310 to 320 are enriched in basic and acidic residues; sequence SEEKAKQKLED. The helical transmembrane segment at 344 to 364 threads the bilayer; the sequence is TLLIFLDWLVTSGVYYGLSWN. The Extracellular segment spans residues 365-371; that stretch reads TSNLGGN. Residues 372 to 392 traverse the membrane as a helical segment; sequence VLLNFVISGAVEIPAYIFLLL. Over 393–400 the chain is Cytoplasmic; sequence TLNRWGRR. A helical membrane pass occupies residues 401–421; it reads SILCGCLVMAGLSLLATVIIP. Topologically, residues 422–427 are extracellular; it reads QRMHTL. The helical transmembrane segment at 428-448 threads the bilayer; the sequence is IVACAMLGKLAITASYGTVYI. Over 449-462 the chain is Cytoplasmic; it reads FSAEQFPTVVRNVA. The chain crosses the membrane as a helical span at residues 463–483; the sequence is LGAASMVARISGMMAPFLNFL. The Extracellular portion of the chain corresponds to 484–489; the sequence is ATIWKP. A helical membrane pass occupies residues 490–510; it reads LPLLICGSLTLVAGLLSLLLP. Residues 511-567 are Cytoplasmic-facing; that stretch reads ETHNKPMLETIADGERFGKKTKADVYLETGQELRAPEAQPLKGSGETNGSTIANGHK. Positions 546–567 are disordered; sequence PEAQPLKGSGETNGSTIANGHK. Residues 555–567 are compositionally biased toward polar residues; it reads GETNGSTIANGHK.

This sequence belongs to the major facilitator (TC 2.A.1) superfamily. Organic cation transporter (TC 2.A.1.19) family.

The protein localises to the membrane. Probably transports organic cations. The sequence is that of Organic cation transporter-like protein (Orct2) from Drosophila melanogaster (Fruit fly).